Here is a 231-residue protein sequence, read N- to C-terminus: Large ribosomal subunit protein uL1 (231 aa).

Belongs to the universal ribosomal protein uL1 family. Part of the 50S ribosomal subunit.

In terms of biological role, binds directly to 23S rRNA. The L1 stalk is quite mobile in the ribosome, and is involved in E site tRNA release. Its function is as follows. Protein L1 is also a translational repressor protein, it controls the translation of the L11 operon by binding to its mRNA. This chain is Large ribosomal subunit protein uL1, found in Pseudomonas aeruginosa (strain LESB58).